The following is a 188-amino-acid chain: MSRIGKLAIKLGDKTKAVIAGEQVNFEGPKGKLSVKLPGKVKVEIKDGQMTVQREDDSREARSLHGLTRTILANAAKGVSTGFEKKLDIRGVGFRAEVKGKAIHFSLGFSHPVVFNLPEGVTAEVDKAPRNEDSLPTVGLTLRSSDKEALGATAVNIRSLRPPEPYKGKGIKYAEERIRRKEGKTGTT.

The protein belongs to the universal ribosomal protein uL6 family. As to quaternary structure, part of the 50S ribosomal subunit.

Functionally, this protein binds to the 23S rRNA, and is important in its secondary structure. It is located near the subunit interface in the base of the L7/L12 stalk, and near the tRNA binding site of the peptidyltransferase center. This Myxococcus xanthus (strain DK1622) protein is Large ribosomal subunit protein uL6.